Here is a 138-residue protein sequence, read N- to C-terminus: Putative transcriptional regulatory protein NedR (138 aa).

The interval 1–25 (MCWGRSWTFGRSSSKGWRPTSSASS) is disordered. Polar residues predominate over residues 9 to 25 (FGRSSSKGWRPTSSASS).

In terms of biological role, may serve as a transcriptional regulator. This is Putative transcriptional regulatory protein NedR (nedR) from Micromonospora viridifaciens.